The following is a 631-amino-acid chain: Phosphomethylpyrimidine synthase (631 aa).

Residues Asn-239, Met-268, Tyr-297, His-333, 353-355 (SRG), 394-397 (DGLR), and Glu-433 contribute to the substrate site. His-437 is a Zn(2+) binding site. Tyr-460 provides a ligand contact to substrate. Zn(2+) is bound at residue His-501. Residues Cys-581, Cys-584, and Cys-589 each coordinate [4Fe-4S] cluster.

It belongs to the ThiC family. Homodimer. The cofactor is [4Fe-4S] cluster.

It catalyses the reaction 5-amino-1-(5-phospho-beta-D-ribosyl)imidazole + S-adenosyl-L-methionine = 4-amino-2-methyl-5-(phosphooxymethyl)pyrimidine + CO + 5'-deoxyadenosine + formate + L-methionine + 3 H(+). It functions in the pathway cofactor biosynthesis; thiamine diphosphate biosynthesis. Functionally, catalyzes the synthesis of the hydroxymethylpyrimidine phosphate (HMP-P) moiety of thiamine from aminoimidazole ribotide (AIR) in a radical S-adenosyl-L-methionine (SAM)-dependent reaction. The protein is Phosphomethylpyrimidine synthase of Salmonella schwarzengrund (strain CVM19633).